The primary structure comprises 1135 residues: MKWVKSGVGILGILLTICHAVTSQGHILDITDSLKITFKTLSNFGPRAQSIQNVTIENVGIKDIPDSGWRCYFCHDQLLFPGTFNLARNQYFLRPILDNYVVLSDGFLLEFIKGCMYRITPIPRNAPIKTRDKREFTLLAEQFSVSKYDSFPKWYCETISGGNTEVGIIRNTENLKYVEDFDSSYNWFRIPHDFRSVPLQPQDRFSANHKASSVDECKYKVIPTPVKASVSKVQRNFGTTVYYGTTDTSIRGREKLFKVAEQLALKHNLGLVEITPGLTVNNGISLVVTGNYVERNIPSPDEAYSLTVTADLISIEAPALPGLINGIETIHSLSAWDMALPYGGIKDFPRFPFRGIFLDIASNFPGYNYIKKFLTVMAQYKLNKLVLPMYNNEGFRLQLNDSPRYEFQALHMIGGKRCHDLKEEKCLFSQLGSGPDSSGGYLTKAQMTDLIKTADLLNIEIIMSMNIGESARGAIVPLKQSPHSRLLYDPDDTDFVDRFYPQKDTSMNPCREETTYFYDHMLKQLKDIYNAASVPLKTIMIGSKVNFDQVLNSKYCYASNLNSTQRLMARGNLERNINGFKLNFTKRLVKTAHDNGIKEVMAIDDVFTTEFDAEGNTPNTVYDTKNSDNSTRFNATVTAVHSRYDTVRDERLWKRGDRFAELGYKVILSPPILDFNYAVEPDPDRPGDYDSVIRNISFSKLFRFVPDSRCCNIPNAIQHDCALESDCTTAGAKDSYIGTLGKLDTRKLRSLKDWNELLFPRLLIFAERSWHKSSWEDSFGPHRASVNNITRQLITNYTVPNWNDINNEESKVLGCISRKEKLRLMHEDGLKPYVEPPGARLLGGNTMRIAASTTEDSFWVQASVNGNPWTDNVKILDVNPTDSVRLRTVHPAKAELRSKEVKLNLTSLPTPRERFRKIAQDALSRRIGIDIQRARMPPMPVNPAYRPPVPLPSFDPADDRAPDLAAIAAAHPPPLPPGMPSHMMPNMPPPFPPRPPFGPPMLPPGQMRALGQQAGQALRGQGTALGPQTGQQPMPAQPRGPLTGQAAGTGVAGQTGQQPSTAGQGTQQGLPGQQRGGVLPGQWPFFPGMPAAQFPPMFNPQMQRALQMRGQGQIPQRTQGAAAGAGQSRIPQQAG.

Positions 1 to 23 are cleaved as a signal peptide; it reads MKWVKSGVGILGILLTICHAVTS. 2 disordered regions span residues 970–1082 and 1107–1135; these read AHPP…LPGQ and QMRG…QQAG. Residues 986–1003 show a composition bias toward pro residues; that stretch reads NMPPPFPPRPPFGPPMLP. 2 stretches are compositionally biased toward low complexity: residues 1004 to 1026 and 1043 to 1073; these read PGQM…TALG and TGQA…LPGQ.

It belongs to the glycosyl hydrolase 20 family. In terms of tissue distribution, prismatic layer of shell (at protein level). Expressed primarily in the mantle with highest level in the mantle edge and lower level in the mantle pallium.

The protein localises to the secreted. The enzyme catalyses Hydrolysis of terminal non-reducing N-acetyl-D-hexosamine residues in N-acetyl-beta-D-hexosaminides.. It participates in glycan degradation; chitin degradation. This Margaritifera margaritifera (Freshwater pearl mussel) protein is Putative beta-hexosaminidase.